Reading from the N-terminus, the 324-residue chain is NADH-quinone oxidoreductase subunit H (324 aa).

The next 8 helical transmembrane spans lie at 11 to 31 (ILIT…CGAF), 81 to 101 (VIFT…FAIV), 114 to 134 (IGIL…LFAG), 154 to 174 (VSYE…AGSF), 186 to 206 (LWNV…GVAV), 237 to 257 (FFVG…TLFF), 265 to 285 (LPPF…FILI), and 304 to 324 (VCLP…LYNA).

Belongs to the complex I subunit 1 family. NDH-1 is composed of 13 different subunits. Subunits NuoA, H, J, K, L, M, N constitute the membrane sector of the complex.

It is found in the cell inner membrane. The enzyme catalyses a quinone + NADH + 5 H(+)(in) = a quinol + NAD(+) + 4 H(+)(out). In terms of biological role, NDH-1 shuttles electrons from NADH, via FMN and iron-sulfur (Fe-S) centers, to quinones in the respiratory chain. The immediate electron acceptor for the enzyme in this species is believed to be ubiquinone. Couples the redox reaction to proton translocation (for every two electrons transferred, four hydrogen ions are translocated across the cytoplasmic membrane), and thus conserves the redox energy in a proton gradient. This subunit may bind ubiquinone. This is NADH-quinone oxidoreductase subunit H from Pectobacterium atrosepticum (strain SCRI 1043 / ATCC BAA-672) (Erwinia carotovora subsp. atroseptica).